Consider the following 212-residue polypeptide: Putative 3-methyladenine DNA glycosylase (212 aa).

This sequence belongs to the DNA glycosylase MPG family.

The polypeptide is Putative 3-methyladenine DNA glycosylase (Frankia casuarinae (strain DSM 45818 / CECT 9043 / HFP020203 / CcI3)).